We begin with the raw amino-acid sequence, 122 residues long: UPF0102 protein RHE_CH00320 (122 aa).

The protein belongs to the UPF0102 family.

The polypeptide is UPF0102 protein RHE_CH00320 (Rhizobium etli (strain ATCC 51251 / DSM 11541 / JCM 21823 / NBRC 15573 / CFN 42)).